The following is a 291-amino-acid chain: Elongation factor Ts (291 aa).

The interval 79-82 (TDFV) is involved in Mg(2+) ion dislocation from EF-Tu.

The protein belongs to the EF-Ts family.

It is found in the cytoplasm. Its function is as follows. Associates with the EF-Tu.GDP complex and induces the exchange of GDP to GTP. It remains bound to the aminoacyl-tRNA.EF-Tu.GTP complex up to the GTP hydrolysis stage on the ribosome. This is Elongation factor Ts from Jannaschia sp. (strain CCS1).